Here is a 566-residue protein sequence, read N- to C-terminus: Mucolipin-2 (566 aa).

Over 1-65 (MARQPYRFPQ…YRARRQIPWK (65 aa)) the chain is Cytoplasmic. A helical membrane pass occupies residues 66-86 (LGLQILKIVMVTTQLVRFGLS). Residues 87–288 (NQLVVAFKED…IFGSTQKNAQ (202 aa)) lie on the Extracellular side of the membrane. The extracellular/lumenal pore loop stretch occupies residues 107–123 (KGYSGTDEDDYSCSVYT). 2 cysteine pairs are disulfide-bonded: C164-C190 and C243-C274. The chain crosses the membrane as a helical span at residues 289-309 (YVLVFDAFVIVICLASLILCT). At 310–346 (RSIVLALRLRKRFLNFFLEKYKRPVCDTDQWEFINGW) the chain is on the cytoplasmic side. The chain crosses the membrane as a helical span at residues 347–367 (YVLVIISDLMTIIGSILKMEI). Topologically, residues 368-376 (KAKNLTNYD) are extracellular. Residues 377–397 (LCSIFLGTSTLLVWVGVIRYL) traverse the membrane as a helical segment. Topologically, residues 398 to 419 (GYFQAYNVLILTMQASLPKVLR) are cytoplasmic. A helical membrane pass occupies residues 420 to 440 (FCACAGMIYLGYTFCGWIVLG). Residues 441-448 (PYHDKFEN) lie on the Extracellular side of the membrane. Positions 449 to 469 (LNTVAECLFSLVNGDDMFATF) form an intramembrane region, pore-forming. The Selectivity filter motif lies at 461 to 464 (NGDD). At 470–480 (AQIQQKSILVW) the chain is on the extracellular side. Residues 481–502 (LFSRLYLYSFISLFIYMILSLF) form a helical membrane-spanning segment. At 503-566 (IALITDSYDT…RSDDHLIPIS (64 aa)) the chain is on the cytoplasmic side.

This sequence belongs to the transient receptor (TC 1.A.4) family. Polycystin subfamily. MCOLN2 sub-subfamily. As to quaternary structure, forms homooligomeric complexes; probably tetrameric. Can heterooligomerize with MCOLN1; heteromeric assemblies have different channel properties as compared to the respective homooligomers and may be tissue-specific. Interacts with TMEM176A.

Its subcellular location is the cell membrane. The protein localises to the late endosome membrane. It localises to the lysosome membrane. It is found in the recycling endosome membrane. It catalyses the reaction Ca(2+)(in) = Ca(2+)(out). The catalysed reaction is Fe(2+)(in) = Fe(2+)(out). Channel activity is reduced by low extracellular/lumenal pH level. In terms of biological role, nonselective cation channel probably playing a role in the regulation of membrane trafficking events. Acts as a Ca(2+)-permeable cation channel with inwardly rectifying activity. May activate ARF6 and be involved in the trafficking of GPI-anchored cargo proteins to the cell surface via the ARF6-regulated recycling pathway. May play a role in immune processes. In adaptive immunity, TRPML2 and TRPML1 may play redundant roles in the function of the specialized lysosomes of B cells. In the innate immune response, may play a role in the regulation of chemokine secretion and macrophage migration. Through a possible and probably tissue-specific heteromerization with MCOLN1 may be at least in part involved in many lysosome-dependent cellular events. Also functions as a Fe(2+) permeable channel. This is Mucolipin-2 from Homo sapiens (Human).